The following is a 134-amino-acid chain: ATP synthase epsilon chain (134 aa).

Over residues 94 to 104 (AKLAKSRAESH) the composition is skewed to basic and acidic residues. The disordered stretch occupies residues 94–115 (AKLAKSRAESHLEDDDDNTDIN).

Belongs to the ATPase epsilon chain family. In terms of assembly, F-type ATPases have 2 components, CF(1) - the catalytic core - and CF(0) - the membrane proton channel. CF(1) has five subunits: alpha(3), beta(3), gamma(1), delta(1), epsilon(1). CF(0) has three main subunits: a, b and c.

The protein localises to the cell membrane. Its function is as follows. Produces ATP from ADP in the presence of a proton gradient across the membrane. This Staphylococcus epidermidis (strain ATCC 12228 / FDA PCI 1200) protein is ATP synthase epsilon chain.